Consider the following 783-residue polypeptide: Putative ATP-dependent DNA helicase fml2 (783 aa).

The Helicase ATP-binding domain occupies 118-286 (FCEQALFHNL…KVVDCLHISK (169 aa)). ATP is bound at residue 131–138 (LPTGLGKT). Residues 234–237 (DEAH) carry the DEAH box motif. One can recognise a Helicase C-terminal domain in the interval 450–619 (KMNHLLELLK…GKKIALKKDV (170 aa)).

This sequence belongs to the DEAD box helicase family. DEAH subfamily. FANCM sub-subfamily.

The protein localises to the nucleus. Its subcellular location is the nucleolus. It catalyses the reaction ATP + H2O = ADP + phosphate + H(+). The polypeptide is Putative ATP-dependent DNA helicase fml2 (Schizosaccharomyces pombe (strain 972 / ATCC 24843) (Fission yeast)).